Consider the following 538-residue polypeptide: Calcium-dependent protein kinase 8 (538 aa).

Residues Met-1–Ala-26 are disordered. Residue Gly-2 is the site of N-myristoyl glycine attachment. The segment covering Lys-16–Lys-25 has biased composition (basic residues). The Protein kinase domain occupies Tyr-64–Leu-322. Residues Leu-70 to Thr-78 and Lys-93 each bind ATP. The active-site Proton acceptor is Asp-188. The tract at residues Met-328 to Ile-358 is autoinhibitory domain. EF-hand domains are found at residues Glu-365–Gln-400, Met-401–Ile-436, Gly-437–Gly-472, and Asn-473–Trp-508. Residues Asp-378, Ser-380, Asn-382, Gln-384, Asp-389, Asp-414, Asp-416, Asn-418, Glu-425, Asp-450, Asn-452, Ser-454, Tyr-456, Glu-461, Asp-486, Asp-488, Asp-490, Lys-492, and Glu-497 each contribute to the Ca(2+) site.

The protein belongs to the protein kinase superfamily. Ser/Thr protein kinase family. CDPK subfamily.

The protein resides in the membrane. The enzyme catalyses L-seryl-[protein] + ATP = O-phospho-L-seryl-[protein] + ADP + H(+). It catalyses the reaction L-threonyl-[protein] + ATP = O-phospho-L-threonyl-[protein] + ADP + H(+). Its activity is regulated as follows. Activated by calcium. Autophosphorylation may play an important role in the regulation of the kinase activity. In terms of biological role, may play a role in signal transduction pathways that involve calcium as a second messenger. This is Calcium-dependent protein kinase 8 from Oryza sativa subsp. japonica (Rice).